The primary structure comprises 40 residues: Dermonecrotic toxin LgSicTox-alphaI-1 (40 aa).

2 residues coordinate Mg(2+): E32 and D34.

This sequence belongs to the arthropod phospholipase D family. Class II subfamily. Mg(2+) is required as a cofactor. Contains 2 disulfide bonds. As to expression, expressed by the venom gland.

It localises to the secreted. The enzyme catalyses an N-(acyl)-sphingosylphosphocholine = an N-(acyl)-sphingosyl-1,3-cyclic phosphate + choline. It carries out the reaction an N-(acyl)-sphingosylphosphoethanolamine = an N-(acyl)-sphingosyl-1,3-cyclic phosphate + ethanolamine. The catalysed reaction is a 1-acyl-sn-glycero-3-phosphocholine = a 1-acyl-sn-glycero-2,3-cyclic phosphate + choline. It catalyses the reaction a 1-acyl-sn-glycero-3-phosphoethanolamine = a 1-acyl-sn-glycero-2,3-cyclic phosphate + ethanolamine. Functionally, dermonecrotic toxins cleave the phosphodiester linkage between the phosphate and headgroup of certain phospholipids (sphingolipid and lysolipid substrates), forming an alcohol (often choline) and a cyclic phosphate. This toxin acts on sphingomyelin (SM). It may also act on ceramide phosphoethanolamine (CPE), lysophosphatidylcholine (LPC) and lysophosphatidylethanolamine (LPE), but not on lysophosphatidylserine (LPS), and lysophosphatidylglycerol (LPG). It acts by transphosphatidylation, releasing exclusively cyclic phosphate products as second products. In vivo, intradermal injection induces dermonecrosis. Induces, hemolysis, vascular permeability, edema, inflammatory response, and platelet aggregation. This is Dermonecrotic toxin LgSicTox-alphaI-1 from Loxosceles gaucho (Spider).